A 109-amino-acid polypeptide reads, in one-letter code: Flagellar hook-basal body complex protein FliE (109 aa).

A disordered region spans residues 1–38 (MQAIHNDKSLLSPFSELNTDNRTQREESGSTFKEQKGG). Positions 22 to 38 (RTQREESGSTFKEQKGG) are enriched in basic and acidic residues.

It belongs to the FliE family.

The protein resides in the bacterial flagellum basal body. This is Flagellar hook-basal body complex protein FliE from Helicobacter acinonychis (strain Sheeba).